Reading from the N-terminus, the 407-residue chain is MAYQEPNKDGFYGKFGGRFVPETLMTAVLELEKAYRESQADPSFQEELNQLLRQYVGRETPLYYAKNLTQHIGGAKIYLKREDLNHTGAHKINNALGQVWLAKRMGKKKIIAETGAGQHGVATATAAALFNMECTIYMGEEDVKRQALNVFRMELLGAKVEAVTDGSRVLKDAVNAALRSWVANIDDTHYILGSALGPHPFPEIVRDFQSVIGREAKQQYRDLTGQNLPDALVACVGGGSNAIGLFHPFVEDESVAMYGAEAAGFGVDTEHHAATLTKGRPGVLHGSLMDVLQDAHGQILEAFSISAGLDYPGIGPEHSHYHDIKRASYVPVTDEEALEGFQLLSRVEGIIPALESSHAIAFAVKLAKELGPEKSMIVCLSGRGDKDVVQVKDRLEADAAKKGEAHA.

Lysine 91 carries the post-translational modification N6-(pyridoxal phosphate)lysine.

This sequence belongs to the TrpB family. Tetramer of two alpha and two beta chains. Requires pyridoxal 5'-phosphate as cofactor.

The enzyme catalyses (1S,2R)-1-C-(indol-3-yl)glycerol 3-phosphate + L-serine = D-glyceraldehyde 3-phosphate + L-tryptophan + H2O. It participates in amino-acid biosynthesis; L-tryptophan biosynthesis; L-tryptophan from chorismate: step 5/5. Functionally, the beta subunit is responsible for the synthesis of L-tryptophan from indole and L-serine. This Streptococcus pneumoniae (strain Taiwan19F-14) protein is Tryptophan synthase beta chain.